We begin with the raw amino-acid sequence, 364 residues long: 2-oxoadipate dioxygenase/decarboxylase, chloroplastic/amyloplastic (364 aa).

The N-terminal 49 residues, 1–49 (MAVALAGARSPGAGAILSLRRLAPAAAAPVRLGGSGTPGTRRRRGIAMA), are a transit peptide targeting the chloroplast. 2 residues coordinate 2-oxoadipate: histidine 107 and arginine 111. A Fe(2+)-binding site is contributed by histidine 107. Histidine 243 provides a ligand contact to Fe(2+). 2-oxoadipate is bound by residues glutamine 289 and tyrosine 313. Glutamate 315 contributes to the Fe(2+) binding site.

This sequence belongs to the 2-oxoadipate dioxygenase/decarboxylase family. Fe(2+) is required as a cofactor. As to expression, expressed in roots, stems, leaf sheaths, leaf blades, panicles, and endosperm.

The protein localises to the plastid. It is found in the chloroplast. It localises to the amyloplast. The catalysed reaction is 2-oxoadipate + O2 = (R)-2-hydroxyglutarate + CO2. Its pathway is amino-acid degradation. In terms of biological role, catalyzes the decarboxylation and hydroxylation of 2-oxoadipate (2OA) to form D-2-hydroxyglutarate (D-2-HGA). Is involved in a D-lysine catabolic pathway. Involved in the regulation of starch synthesis and amyloplast development within the peripheral endosperm during the grain-filling stage. This chain is 2-oxoadipate dioxygenase/decarboxylase, chloroplastic/amyloplastic, found in Oryza sativa subsp. japonica (Rice).